The following is a 154-amino-acid chain: Heat shock protein beta-3 (154 aa).

The interval 48–71 is disordered; the sequence is ARGAGTPQALAEDSASTEKPPGEG. The sHSP domain maps to 57–154; that stretch reads LAEDSASTEK…VEVKDSLGTK (98 aa).

The protein belongs to the small heat shock protein (HSP20) family.

It localises to the cytoplasm. It is found in the nucleus. Functionally, inhibitor of actin polymerization. In Mus musculus (Mouse), this protein is Heat shock protein beta-3 (Hspb3).